The chain runs to 153 residues: D-aminoacyl-tRNA deacylase (153 aa).

Residues 137–138 (GP) carry the Gly-cisPro motif, important for rejection of L-amino acids motif.

This sequence belongs to the DTD family. Homodimer.

It is found in the cytoplasm. It catalyses the reaction glycyl-tRNA(Ala) + H2O = tRNA(Ala) + glycine + H(+). It carries out the reaction a D-aminoacyl-tRNA + H2O = a tRNA + a D-alpha-amino acid + H(+). In terms of biological role, an aminoacyl-tRNA editing enzyme that deacylates mischarged D-aminoacyl-tRNAs. Also deacylates mischarged glycyl-tRNA(Ala), protecting cells against glycine mischarging by AlaRS. Acts via tRNA-based rather than protein-based catalysis; rejects L-amino acids rather than detecting D-amino acids in the active site. By recycling D-aminoacyl-tRNA to D-amino acids and free tRNA molecules, this enzyme counteracts the toxicity associated with the formation of D-aminoacyl-tRNA entities in vivo and helps enforce protein L-homochirality. The chain is D-aminoacyl-tRNA deacylase from Methylococcus capsulatus (strain ATCC 33009 / NCIMB 11132 / Bath).